The sequence spans 39 residues: Natriuretic peptide NsNP-b (39 aa).

A propeptide spanning residues 1–8 (SGSKTAKI) is cleaved from the precursor. Cysteines 12 and 28 form a disulfide. A disordered region spans residues 19–39 (RIGSTSGMGCGSVPKPTPGGS).

This sequence belongs to the natriuretic peptide family. As to expression, expressed by the venom gland.

The protein resides in the secreted. Functionally, snake venom natriuretic peptide that targets both NPR1 and NPR2. Exhibits hypotensive and vasodepressor activities. This chain is Natriuretic peptide NsNP-b, found in Notechis scutatus scutatus (Mainland tiger snake).